The following is a 238-amino-acid chain: Ribonuclease PH (238 aa).

Phosphate-binding positions include Arg-86 and 124-126 (GTR).

Belongs to the RNase PH family. In terms of assembly, homohexameric ring arranged as a trimer of dimers.

The enzyme catalyses tRNA(n+1) + phosphate = tRNA(n) + a ribonucleoside 5'-diphosphate. Phosphorolytic 3'-5' exoribonuclease that plays an important role in tRNA 3'-end maturation. Removes nucleotide residues following the 3'-CCA terminus of tRNAs; can also add nucleotides to the ends of RNA molecules by using nucleoside diphosphates as substrates, but this may not be physiologically important. Probably plays a role in initiation of 16S rRNA degradation (leading to ribosome degradation) during starvation. This Vibrio vulnificus (strain CMCP6) protein is Ribonuclease PH.